The primary structure comprises 149 residues: Urease accessory protein UreE (149 aa).

Belongs to the UreE family.

The protein localises to the cytoplasm. Its function is as follows. Involved in urease metallocenter assembly. Binds nickel. Probably functions as a nickel donor during metallocenter assembly. In Corynebacterium efficiens (strain DSM 44549 / YS-314 / AJ 12310 / JCM 11189 / NBRC 100395), this protein is Urease accessory protein UreE.